We begin with the raw amino-acid sequence, 176 residues long: Acireductone dioxygenase (176 aa).

Histidine 81, histidine 83, glutamate 87, and histidine 126 together coordinate Fe(2+). Ni(2+)-binding residues include histidine 81, histidine 83, glutamate 87, and histidine 126.

It belongs to the acireductone dioxygenase (ARD) family. Requires Fe(2+) as cofactor. Ni(2+) serves as cofactor.

It is found in the cytoplasm. The protein localises to the nucleus. The catalysed reaction is 1,2-dihydroxy-5-(methylsulfanyl)pent-1-en-3-one + O2 = 4-methylsulfanyl-2-oxobutanoate + formate + 2 H(+). The enzyme catalyses 1,2-dihydroxy-5-(methylsulfanyl)pent-1-en-3-one + O2 = 3-(methylsulfanyl)propanoate + CO + formate + 2 H(+). It participates in amino-acid biosynthesis; L-methionine biosynthesis via salvage pathway; L-methionine from S-methyl-5-thio-alpha-D-ribose 1-phosphate: step 5/6. Its function is as follows. Catalyzes 2 different reactions between oxygen and the acireductone 1,2-dihydroxy-3-keto-5-methylthiopentene (DHK-MTPene) depending upon the metal bound in the active site. Fe-containing acireductone dioxygenase (Fe-ARD) produces formate and 2-keto-4-methylthiobutyrate (KMTB), the alpha-ketoacid precursor of methionine in the methionine recycle pathway. Ni-containing acireductone dioxygenase (Ni-ARD) produces methylthiopropionate, carbon monoxide and formate, and does not lie on the methionine recycle pathway. The sequence is that of Acireductone dioxygenase (adi1) from Sclerotinia sclerotiorum (strain ATCC 18683 / 1980 / Ss-1) (White mold).